Reading from the N-terminus, the 388-residue chain is Na(+)/H(+) antiporter NhaA (388 aa).

Residues 1–11 (MKHLHRFFSSD) are Cytoplasmic-facing. The chain crosses the membrane as a helical span at residues 12 to 31 (ASGGIILIIAAILAMIMANS). Topologically, residues 32–58 (GATSGWYHDFLETPVQLRVGSLEINKN) are periplasmic. The chain crosses the membrane as a helical span at residues 59 to 80 (MLLWINDALMAVFFLLVGLEVK). The Cytoplasmic portion of the chain corresponds to 81 to 96 (RELMQGSLASLRQAAF). Residues 97–116 (PVIAAIGGMIVPALLYLAFN) traverse the membrane as a helical segment. Topologically, residues 117-122 (YADPIT) are periplasmic. The chain crosses the membrane as a helical span at residues 123–130 (REGWAIPA). Topologically, residues 131–154 (ATDIAFALGVLALLGSRVPLALKI) are cytoplasmic. A helical transmembrane segment spans residues 155–176 (FLMALAIIDDLGAIIIIALFYT). Over 177–180 (NDLS) the chain is Periplasmic. Residues 181-200 (MASLGVAAVAIAVLAVLNLC) traverse the membrane as a helical segment. The Cytoplasmic portion of the chain corresponds to 201–204 (GVRR). A helical membrane pass occupies residues 205–222 (TGVYILVGVVLWTAVLKS). Position 223 (Gly-223) is a topological domain, periplasmic. Residues 224 to 236 (VHATLAGVIVGFF) form a helical membrane-spanning segment. At 237-253 (IPLKEKHGRSPAKRLEH) the chain is on the cytoplasmic side. Residues 254 to 272 (VLHPWVAYLILPLFAFANA) form a helical membrane-spanning segment. Topologically, residues 273–286 (GVSLQGVTLDGLTS) are periplasmic. The helical transmembrane segment at 287–310 (ILPLGIIAGLLIGKPLGISLFCWL) threads the bilayer. Topologically, residues 311–339 (ALRLKLAHLPEGTTYQQIMAVGILCGIGF) are cytoplasmic. A helical membrane pass occupies residues 340 to 350 (TMSIFIASLAF). Over 351 to 357 (GSVDPEL) the chain is Periplasmic. Residues 358–380 (INWAKLGILVGSISSAVIGYSWL) traverse the membrane as a helical segment. The Cytoplasmic segment spans residues 381-388 (RVRLRPSV).

It belongs to the NhaA Na(+)/H(+) (TC 2.A.33) antiporter family.

It localises to the cell inner membrane. It carries out the reaction Na(+)(in) + 2 H(+)(out) = Na(+)(out) + 2 H(+)(in). Na(+)/H(+) antiporter that extrudes sodium in exchange for external protons. This is Na(+)/H(+) antiporter NhaA from Escherichia coli O9:H4 (strain HS).